The chain runs to 968 residues: Isoleucine--tRNA ligase (968 aa).

Residues 68 to 78 (PYANGALHMGH) carry the 'HIGH' region motif. Glu582 serves as a coordination point for L-isoleucyl-5'-AMP. The 'KMSKS' region motif lies at 623–627 (KMSKS). Lys626 lines the ATP pocket. Residues Cys936, Cys939, Cys956, and Cys959 each coordinate Zn(2+).

It belongs to the class-I aminoacyl-tRNA synthetase family. IleS type 1 subfamily. In terms of assembly, monomer. Zn(2+) is required as a cofactor.

The protein resides in the cytoplasm. It catalyses the reaction tRNA(Ile) + L-isoleucine + ATP = L-isoleucyl-tRNA(Ile) + AMP + diphosphate. In terms of biological role, catalyzes the attachment of isoleucine to tRNA(Ile). As IleRS can inadvertently accommodate and process structurally similar amino acids such as valine, to avoid such errors it has two additional distinct tRNA(Ile)-dependent editing activities. One activity is designated as 'pretransfer' editing and involves the hydrolysis of activated Val-AMP. The other activity is designated 'posttransfer' editing and involves deacylation of mischarged Val-tRNA(Ile). The chain is Isoleucine--tRNA ligase from Prochlorococcus marinus (strain MIT 9312).